The sequence spans 71 residues: High-potential iron-sulfur protein (71 aa).

Gln-1 carries the pyrrolidone carboxylic acid modification. 4 residues coordinate [4Fe-4S] cluster: Cys-37, Cys-40, Cys-50, and Cys-64.

It belongs to the high-potential iron-sulfur protein (HiPIP) family. Homodimer.

Its function is as follows. Specific class of high-redox-potential 4Fe-4S ferredoxins. Functions in anaerobic electron transport in most purple and in some other photosynthetic bacteria and in at least one genus (Paracoccus) of halophilic, denitrifying bacteria. The protein is High-potential iron-sulfur protein (hip) of Halomonas halodenitrificans (strain ATCC 12084 / NCIMB 8669) (Paracoccus halodenitrificans).